The following is a 537-amino-acid chain: CTP synthase (537 aa).

Residues 1-269 (MNQTKYIFVT…DVVALKKLDL (269 aa)) form an amidoligase domain region. Ser15 is a binding site for CTP. A UTP-binding site is contributed by Ser15. 16–21 (SLGKGI) serves as a coordination point for ATP. Position 56 (Tyr56) interacts with L-glutamine. ATP is bound at residue Asp73. Positions 73 and 143 each coordinate Mg(2+). CTP is bound by residues 150–152 (DIE), 190–195 (KTKPTQ), and Lys226. UTP contacts are provided by residues 190–195 (KTKPTQ) and Lys226. The Glutamine amidotransferase type-1 domain occupies 295–537 (NIGLVGKYVE…VAAAVNAHKK (243 aa)). Gly357 provides a ligand contact to L-glutamine. Cys384 serves as the catalytic Nucleophile; for glutamine hydrolysis. L-glutamine-binding positions include 385-388 (LGMQ), Glu408, and Arg465. Active-site residues include His510 and Glu512.

The protein belongs to the CTP synthase family. In terms of assembly, homotetramer.

It carries out the reaction UTP + L-glutamine + ATP + H2O = CTP + L-glutamate + ADP + phosphate + 2 H(+). The catalysed reaction is L-glutamine + H2O = L-glutamate + NH4(+). It catalyses the reaction UTP + NH4(+) + ATP = CTP + ADP + phosphate + 2 H(+). Its pathway is pyrimidine metabolism; CTP biosynthesis via de novo pathway; CTP from UDP: step 2/2. Its activity is regulated as follows. Allosterically activated by GTP, when glutamine is the substrate; GTP has no effect on the reaction when ammonia is the substrate. The allosteric effector GTP functions by stabilizing the protein conformation that binds the tetrahedral intermediate(s) formed during glutamine hydrolysis. Inhibited by the product CTP, via allosteric rather than competitive inhibition. Functionally, catalyzes the ATP-dependent amination of UTP to CTP with either L-glutamine or ammonia as the source of nitrogen. Regulates intracellular CTP levels through interactions with the four ribonucleotide triphosphates. The sequence is that of CTP synthase from Flavobacterium johnsoniae (strain ATCC 17061 / DSM 2064 / JCM 8514 / BCRC 14874 / CCUG 350202 / NBRC 14942 / NCIMB 11054 / UW101) (Cytophaga johnsonae).